The chain runs to 240 residues: Urease accessory protein UreD (240 aa).

It belongs to the UreD family. As to quaternary structure, ureD, UreF and UreG form a complex that acts as a GTP-hydrolysis-dependent molecular chaperone, activating the urease apoprotein by helping to assemble the nickel containing metallocenter of UreC. The UreE protein probably delivers the nickel.

The protein resides in the cytoplasm. Functionally, required for maturation of urease via the functional incorporation of the urease nickel metallocenter. The protein is Urease accessory protein UreD of Granulibacter bethesdensis (strain ATCC BAA-1260 / CGDNIH1).